A 321-amino-acid chain; its full sequence is Sideroflexin-3 (321 aa).

Residue methionine 1 is modified to N-acetylmethionine. 4 helical membrane-spanning segments follow: residues 146–164 (LGMA…ALGL), 174–194 (LVGR…NIPL), 226–246 (FQVV…PPVI), and 266–286 (LQMG…CALF).

The protein belongs to the sideroflexin family.

The protein localises to the mitochondrion membrane. It carries out the reaction L-serine(in) = L-serine(out). In terms of biological role, mitochondrial serine transporter that mediates transport of serine into mitochondria, an important step of the one-carbon metabolism pathway. Mitochondrial serine is converted to glycine and formate, which then exits to the cytosol where it is used to generate the charged folates that serve as one-carbon donors. This Bos taurus (Bovine) protein is Sideroflexin-3 (SFXN3).